The following is a 151-amino-acid chain: Large ribosomal subunit protein bL9 (151 aa).

It belongs to the bacterial ribosomal protein bL9 family.

In terms of biological role, binds to the 23S rRNA. The sequence is that of Large ribosomal subunit protein bL9 from Oenococcus oeni (strain ATCC BAA-331 / PSU-1).